A 103-amino-acid chain; its full sequence is MFAVIRTGGKQYRVAKDDVLEVERNGGEAGDKIDLEVLMLGGEGGTLKVGAPLVDGAKVKAEIVEHTRGPKITIFKKRRRQNYRRKNGHRQDLMLVKILDIAG.

The protein belongs to the bacterial ribosomal protein bL21 family. Part of the 50S ribosomal subunit. Contacts protein L20.

Its function is as follows. This protein binds to 23S rRNA in the presence of protein L20. This Parvibaculum lavamentivorans (strain DS-1 / DSM 13023 / NCIMB 13966) protein is Large ribosomal subunit protein bL21.